The primary structure comprises 184 residues: MYQLEKIWVLLCLALVGVLGFGQFHMKHYQLQRNYNTQEDSGENDNSVLRTFRRCMWEQSKFLPRRLVLLSLCSNLFCENNHIMPRSRSIFVVEKMSRPNDCLDILPEQCEQGDEEELMYKPFPDCCPVYCNLKRRMQRLRTMHFRHRLLRNKQDGSAGSAGGGSAGGDGPNNSLLSEFVYNNY.

An N-terminal signal peptide occupies residues 1 to 20 (MYQLEKIWVLLCLALVGVLG).

This is an uncharacterized protein from Drosophila melanogaster (Fruit fly).